The following is a 358-amino-acid chain: Peptide chain release factor 1 (358 aa).

Position 233 is an N5-methylglutamine (Gln233).

It belongs to the prokaryotic/mitochondrial release factor family. Methylated by PrmC. Methylation increases the termination efficiency of RF1.

It localises to the cytoplasm. Its function is as follows. Peptide chain release factor 1 directs the termination of translation in response to the peptide chain termination codons UAG and UAA. The protein is Peptide chain release factor 1 of Lachnoclostridium phytofermentans (strain ATCC 700394 / DSM 18823 / ISDg) (Clostridium phytofermentans).